The primary structure comprises 163 residues: Protein-export protein SecB (163 aa).

Belongs to the SecB family. As to quaternary structure, homotetramer, a dimer of dimers. One homotetramer interacts with 1 SecA dimer.

The protein resides in the cytoplasm. Functionally, one of the proteins required for the normal export of preproteins out of the cell cytoplasm. It is a molecular chaperone that binds to a subset of precursor proteins, maintaining them in a translocation-competent state. It also specifically binds to its receptor SecA. This is Protein-export protein SecB from Methylibium petroleiphilum (strain ATCC BAA-1232 / LMG 22953 / PM1).